A 77-amino-acid polypeptide reads, in one-letter code: Sec-independent protein translocase protein TatA (77 aa).

A helical transmembrane segment spans residues 1–21 (MGSFSIWHWLIVLVIVMLVFG). Positions 50–77 (ADASTQQKISGGQTLEGEAREKVEKTHS) are disordered. Residues 53–62 (STQQKISGGQ) are compositionally biased toward polar residues. Residues 66–77 (GEAREKVEKTHS) are compositionally biased toward basic and acidic residues.

It belongs to the TatA/E family. The Tat system comprises two distinct complexes: a TatABC complex, containing multiple copies of TatA, TatB and TatC subunits, and a separate TatA complex, containing only TatA subunits. Substrates initially bind to the TatABC complex, which probably triggers association of the separate TatA complex to form the active translocon.

The protein resides in the cell inner membrane. In terms of biological role, part of the twin-arginine translocation (Tat) system that transports large folded proteins containing a characteristic twin-arginine motif in their signal peptide across membranes. TatA could form the protein-conducting channel of the Tat system. This is Sec-independent protein translocase protein TatA from Azoarcus sp. (strain BH72).